The primary structure comprises 388 residues: Glycoprotein-N-acetylgalactosamine 3-beta-galactosyltransferase 1 (388 aa).

Topologically, residues 1–12 (MAPISHYIGKTS) are cytoplasmic. Residues 13–30 (LTTLAIGIAIGITVSNIV) traverse the membrane as a helical; Signal-anchor for type II membrane protein segment. The Lumenal portion of the chain corresponds to 31–388 (KFSSTQRRHF…LAQTDSKHIS (358 aa)). A disordered region spans residues 43-65 (SGYIPDSPHSHGENDFVEGPDDS). The N-linked (GlcNAc...) asparagine glycan is linked to Asn80. Cysteines 95 and 119 form a disulfide. UDP is bound by residues Met98, Asn100, Glu142, Gly143, Arg144, Lys150, and Asp173. Positions 173 and 175 each coordinate Mn(2+). Cys238 and Cys253 are oxidised to a cystine. Residue Trp292 coordinates a glycoprotein. Cys307 and Cys308 are oxidised to a cystine. UDP contacts are provided by His316 and Tyr317. Mn(2+) is bound at residue His316. The interval 344–388 (STEEQDHGSSHKDTDAMKPEGKGMEDKEDEETNISLAQTDSKHIS) is disordered. The segment covering 347–368 (EQDHGSSHKDTDAMKPEGKGME) has biased composition (basic and acidic residues). A glycan (N-linked (GlcNAc...) asparagine) is linked at Asn376.

Belongs to the glycosyltransferase 31 family. Beta3-Gal-T subfamily. In terms of assembly, homodimer; disulfide-linked. Requires Mn(2+) as cofactor.

The protein localises to the membrane. The enzyme catalyses an N-acetyl-alpha-D-galactosaminyl derivative + UDP-alpha-D-galactose = a beta-D-galactosyl-(1-&gt;3)-N-acetyl-alpha-D-galactosaminyl derivative + UDP + H(+). It functions in the pathway protein modification; protein glycosylation. Glycosyltransferase that generates the core 1 O-glycan Gal-beta1-3GalNAc-alpha1-Ser/Thr (T antigen), which is a precursor for many extended O-glycans in glycoproteins. This chain is Glycoprotein-N-acetylgalactosamine 3-beta-galactosyltransferase 1, found in Biomphalaria glabrata (Bloodfluke planorb).